The sequence spans 463 residues: Glutamyl-tRNA reductase (463 aa).

Residues 49-52 (TCNR), Ser109, 114-116 (EQQ), and Gln120 contribute to the substrate site. The active-site Nucleophile is Cys50. 196–201 (GAGAMS) provides a ligand contact to NADP(+).

It belongs to the glutamyl-tRNA reductase family. Homodimer.

It catalyses the reaction (S)-4-amino-5-oxopentanoate + tRNA(Glu) + NADP(+) = L-glutamyl-tRNA(Glu) + NADPH + H(+). Its pathway is porphyrin-containing compound metabolism; protoporphyrin-IX biosynthesis; 5-aminolevulinate from L-glutamyl-tRNA(Glu): step 1/2. Catalyzes the NADPH-dependent reduction of glutamyl-tRNA(Glu) to glutamate 1-semialdehyde (GSA). This chain is Glutamyl-tRNA reductase, found in Corynebacterium glutamicum (strain R).